The primary structure comprises 413 residues: MKIYLVGGAVRDALLGLPVKDKDWVVVGATPQEMLDAGYQQVGRDFPVFLHPQTHEEYALARTERKSGSGYTGFTCYAAPDVTLEADLQRRDLTINALARDDAGQIIDPYHGRRDLEARLLRHVSPAFGEDPLRVLRVARFAARYAHLSFRIADETLALMREMTAAGELEHLTPERVWKETENALTTRNPQVYFQVLRDCGALRVLFPEIDALFGVPAPAKWHPEIDTGVHTLMTLSMAAMLSPQLDVRFATLCHDLGKGLTPKNLWPRHHGHGPAGVKLVEQLCQRLRVPNDLRDLAKLVAEYHDLIHTFPILQPKTIVKLFDAIDAWRKPQRVEQIALTSEADVRGRTGFEASDYPQGRWLREAWQVAQAVPTKEVVEAGFKGIEIREELTKRRIAAVANWKEKRCPNPAS.

ATP is bound by residues Gly-8 and Arg-11. Residues Gly-8 and Arg-11 each contribute to the CTP site. The Mg(2+) site is built by Asp-21 and Asp-23. The ATP site is built by Arg-91, Arg-137, and Arg-140. Residues Arg-91, Arg-137, and Arg-140 each contribute to the CTP site. The region spanning Thr-228–Trp-329 is the HD domain.

Belongs to the tRNA nucleotidyltransferase/poly(A) polymerase family. Bacterial CCA-adding enzyme type 1 subfamily. Monomer. Can also form homodimers and oligomers. Requires Mg(2+) as cofactor. The cofactor is Ni(2+).

It catalyses the reaction a tRNA precursor + 2 CTP + ATP = a tRNA with a 3' CCA end + 3 diphosphate. The enzyme catalyses a tRNA with a 3' CCA end + 2 CTP + ATP = a tRNA with a 3' CCACCA end + 3 diphosphate. Its function is as follows. Catalyzes the addition and repair of the essential 3'-terminal CCA sequence in tRNAs without using a nucleic acid template. Adds these three nucleotides in the order of C, C, and A to the tRNA nucleotide-73, using CTP and ATP as substrates and producing inorganic pyrophosphate. tRNA 3'-terminal CCA addition is required both for tRNA processing and repair. Also involved in tRNA surveillance by mediating tandem CCA addition to generate a CCACCA at the 3' terminus of unstable tRNAs. While stable tRNAs receive only 3'-terminal CCA, unstable tRNAs are marked with CCACCA and rapidly degraded. The sequence is that of Multifunctional CCA protein from Salmonella typhimurium (strain LT2 / SGSC1412 / ATCC 700720).